Consider the following 187-residue polypeptide: Phosphatidylethanolamine-binding protein 1 (187 aa).

Ala-2 is modified (N-acetylalanine; in peptide hippocampal cholinergic neurostimulating). A phosphoserine mark is found at Ser-6 and Ser-13. Thr-42 bears the Phosphothreonine mark. Residues Ser-52, Ser-54, Ser-98, and Ser-153 each carry the phosphoserine modification. The interval 93–134 (KGNDISSGTVLSEYVGSGPPKDTGLHRYVWLVYEQEQPLNCD) is interaction with RAF1.

This sequence belongs to the phosphatidylethanolamine-binding protein family. Has a tendency to form dimers by disulfide cross-linking. Interacts with RAF1 and this interaction is enhanced if RAF1 is phosphorylated on residues 'Ser-338', 'Ser-339', 'Tyr-340' and 'Tyr-341'. Interacts with ALOX15; in response to IL13/interleukin-13, prevents the interaction of PEBP1 with RAF1 to activate the ERK signaling cascade. Major component of epididymal secretions and sperm plasma membranes. It is present in cytosols from a variety of other tissues. Highly expressed in brain.

It is found in the cytoplasm. Its subcellular location is the membrane. Functionally, binds ATP, opioids and phosphatidylethanolamine. Has lower affinity for phosphatidylinositol and phosphatidylcholine. Serine protease inhibitor which inhibits thrombin, neuropsin and chymotrypsin but not trypsin, tissue type plasminogen activator and elastase. Inhibits the kinase activity of RAF1 by inhibiting its activation and by dissociating the RAF1/MEK complex and acting as a competitive inhibitor of MEK phosphorylation. In terms of biological role, HCNP may be involved in the function of the presynaptic cholinergic neurons of the central nervous system. HCNP increases the production of choline acetyltransferase but not acetylcholinesterase. Seems to be mediated by a specific receptor. This Rattus norvegicus (Rat) protein is Phosphatidylethanolamine-binding protein 1 (Pebp1).